A 940-amino-acid chain; its full sequence is Inter-alpha-trypsin inhibitor heavy chain H5 (940 aa).

Positions Met1–Gly16 are cleaved as a signal peptide. One can recognise a VIT domain in the interval Val35 to Glu161. Residues Asn97 and Asn127 are each glycosylated (N-linked (GlcNAc...) asparagine). Disordered regions lie at residues Lys117–Lys136 and Ser208–Val227. Asn231 is a glycosylation site (N-linked (GlcNAc...) asparagine). The 184-residue stretch at Asn295–Ile478 folds into the VWFA domain. The interval Asp405–Leu432 is disordered. A compositionally biased stretch (basic and acidic residues) spans Trp407–Pro417. An N-linked (GlcNAc...) asparagine glycan is attached at Asn508. The segment at Pro541 to Asn571 is disordered. 3 N-linked (GlcNAc...) asparagine glycosylation sites follow: Asn774, Asn793, and Asn860.

Belongs to the ITIH family.

The protein localises to the secreted. Its function is as follows. May act as a tumor suppressor. This Pongo abelii (Sumatran orangutan) protein is Inter-alpha-trypsin inhibitor heavy chain H5 (ITIH5).